The primary structure comprises 624 residues: tRNA uridine 5-carboxymethylaminomethyl modification enzyme MnmG (624 aa).

FAD is bound by residues 13–18, V125, and S180; that span reads GGGHAG. 273 to 287 provides a ligand contact to NAD(+); it reads GPRYCPSIEDKIVRF. Residue Q370 coordinates FAD.

This sequence belongs to the MnmG family. In terms of assembly, homodimer. Heterotetramer of two MnmE and two MnmG subunits. The cofactor is FAD.

Its subcellular location is the cytoplasm. NAD-binding protein involved in the addition of a carboxymethylaminomethyl (cmnm) group at the wobble position (U34) of certain tRNAs, forming tRNA-cmnm(5)s(2)U34. This chain is tRNA uridine 5-carboxymethylaminomethyl modification enzyme MnmG, found in Legionella pneumophila (strain Paris).